A 62-amino-acid chain; its full sequence is Mu-elapitoxin-Na1a (62 aa).

4 cysteine pairs are disulfide-bonded: Cys3/Cys22, Cys15/Cys40, Cys44/Cys55, and Cys56/Cys61.

The protein belongs to the three-finger toxin family. Short-chain subfamily. Orphan group XV sub-subfamily. In terms of tissue distribution, expressed by the venom gland.

It localises to the secreted. Functionally, potent inhibitor of human Nav1.8/SCN10A (IC(50)=141-380 nM). Is highly selective for this channel and acts in a reversible manner. Shows a depolarizing shift of activation and hyperpolarizing shift of inactivation. In contrast to the very similar cytotoxin A5 (AC P62375), does not seem to bind integrin alpha-V/beta-3, since it does not promote or inhibit the proliferation of HUVECs and C-PAE cells. In vivo, in rodent models of inflammatory and neuropathic pain, it alleviates nociceptive behaviors more potently than does morphine. It displays no evident cytotoxic, hemolytic and cardiotoxic activities and produces no obvious adverse responses in mice even at a dose 30-fold higher than that producing a significant analgesic effect. The polypeptide is Mu-elapitoxin-Na1a (Naja atra (Chinese cobra)).